The primary structure comprises 163 residues: 2-C-methyl-D-erythritol 2,4-cyclodiphosphate synthase (163 aa).

Residues D9 and H11 each coordinate a divalent metal cation. 4-CDP-2-C-methyl-D-erythritol 2-phosphate contacts are provided by residues 9 to 11 (DVH) and 36 to 37 (HS). A divalent metal cation is bound at residue H44. 4-CDP-2-C-methyl-D-erythritol 2-phosphate-binding positions include 58-60 (DIG), 63-67 (FPDDD), 134-137 (TTSE), F141, and R144.

Belongs to the IspF family. In terms of assembly, homotrimer. Requires a divalent metal cation as cofactor.

It catalyses the reaction 4-CDP-2-C-methyl-D-erythritol 2-phosphate = 2-C-methyl-D-erythritol 2,4-cyclic diphosphate + CMP. It functions in the pathway isoprenoid biosynthesis; isopentenyl diphosphate biosynthesis via DXP pathway; isopentenyl diphosphate from 1-deoxy-D-xylulose 5-phosphate: step 4/6. Its function is as follows. Involved in the biosynthesis of isopentenyl diphosphate (IPP) and dimethylallyl diphosphate (DMAPP), two major building blocks of isoprenoid compounds. Catalyzes the conversion of 4-diphosphocytidyl-2-C-methyl-D-erythritol 2-phosphate (CDP-ME2P) to 2-C-methyl-D-erythritol 2,4-cyclodiphosphate (ME-CPP) with a corresponding release of cytidine 5-monophosphate (CMP). The protein is 2-C-methyl-D-erythritol 2,4-cyclodiphosphate synthase of Halorhodospira halophila (strain DSM 244 / SL1) (Ectothiorhodospira halophila (strain DSM 244 / SL1)).